We begin with the raw amino-acid sequence, 289 residues long: tRNA acetyltransferase TAN1 (289 aa).

Positions 1–10 are enriched in basic and acidic residues; it reads MGEKRNRNGK. Disordered regions lie at residues 1-31 and 64-83; these read MGEKRNRNGKDANSQNRKKFKVSSGFLDPGT and DIKEGEDESENDEKKDLSIE. Position 72 is a phosphoserine (serine 72). Residues 146 to 259 enclose the THUMP domain; that stretch reads ADPKNMVKRT…KSNIGMCVVD (114 aa).

The protein localises to the cytoplasm. Its subcellular location is the nucleus. In terms of biological role, probable tRNA acetyltransferase required for the formation of the modified nucleoside N(4)-acetylcytidine in serine and leucine tRNAs. Binds RNA. This chain is tRNA acetyltransferase TAN1 (TAN1), found in Saccharomyces cerevisiae (strain ATCC 204508 / S288c) (Baker's yeast).